A 328-amino-acid polypeptide reads, in one-letter code: GMP reductase (328 aa).

The active-site Thioimidate intermediate is the cysteine 176. 205–228 (IIADGGIRTHGDVAKSIRFGATMV) lines the NADP(+) pocket.

This sequence belongs to the IMPDH/GMPR family. GuaC type 2 subfamily.

The catalysed reaction is IMP + NH4(+) + NADP(+) = GMP + NADPH + 2 H(+). Its function is as follows. Catalyzes the irreversible NADPH-dependent deamination of GMP to IMP. It functions in the conversion of nucleobase, nucleoside and nucleotide derivatives of G to A nucleotides, and in maintaining the intracellular balance of A and G nucleotides. This Bacillus cereus (strain ATCC 14579 / DSM 31 / CCUG 7414 / JCM 2152 / NBRC 15305 / NCIMB 9373 / NCTC 2599 / NRRL B-3711) protein is GMP reductase.